Here is a 695-residue protein sequence, read N- to C-terminus: GATA zinc finger domain-containing protein 16 (695 aa).

Disordered regions lie at residues S82 to A111, V134 to K304, and N422 to Y472. Low complexity-rich tracts occupy residues S87–A111 and K140–P149. Residues K150–Q174 are a coiled coil. Over residues K155–Q165 the composition is skewed to basic and acidic residues. A compositionally biased stretch (polar residues) spans V199–F209. The segment covering N210–N298 has biased composition (low complexity). Over residues N422–L433 the composition is skewed to polar residues. A compositionally biased stretch (low complexity) spans N434–N446. The segment at C479 to C504 adopts a GATA-type zinc-finger fold. The disordered stretch occupies residues N523–T646. 2 stretches are compositionally biased toward low complexity: residues D544–N556 and G564–T646.

The protein is GATA zinc finger domain-containing protein 16 (gtaP) of Dictyostelium discoideum (Social amoeba).